The primary structure comprises 553 residues: Urocanate hydratase (553 aa).

NAD(+)-binding positions include 45–46 (GG), Gln123, 169–171 (GMG), Asp189, Arg194, 235–236 (NA), 256–260 (QTSAH), 266–267 (YV), Tyr315, and Gly485.

The protein belongs to the urocanase family. The cofactor is NAD(+).

It is found in the cytoplasm. It catalyses the reaction 4-imidazolone-5-propanoate = trans-urocanate + H2O. It functions in the pathway amino-acid degradation; L-histidine degradation into L-glutamate; N-formimidoyl-L-glutamate from L-histidine: step 2/3. Catalyzes the conversion of urocanate to 4-imidazolone-5-propionate. In Staphylococcus saprophyticus subsp. saprophyticus (strain ATCC 15305 / DSM 20229 / NCIMB 8711 / NCTC 7292 / S-41), this protein is Urocanate hydratase.